The chain runs to 193 residues: Peptidyl-tRNA hydrolase (193 aa).

Residue Tyr-16 coordinates tRNA. His-21 (proton acceptor) is an active-site residue. Residues Phe-66, Asn-68, and Asn-114 each coordinate tRNA.

This sequence belongs to the PTH family. As to quaternary structure, monomer.

The protein resides in the cytoplasm. It catalyses the reaction an N-acyl-L-alpha-aminoacyl-tRNA + H2O = an N-acyl-L-amino acid + a tRNA + H(+). In terms of biological role, hydrolyzes ribosome-free peptidyl-tRNAs (with 1 or more amino acids incorporated), which drop off the ribosome during protein synthesis, or as a result of ribosome stalling. Catalyzes the release of premature peptidyl moieties from peptidyl-tRNA molecules trapped in stalled 50S ribosomal subunits, and thus maintains levels of free tRNAs and 50S ribosomes. The protein is Peptidyl-tRNA hydrolase of Pelobacter propionicus (strain DSM 2379 / NBRC 103807 / OttBd1).